The following is a 312-amino-acid chain: Malate dehydrogenase (312 aa).

NAD(+) contacts are provided by residues 12 to 17 and aspartate 36; that span reads GAGFTG. The substrate site is built by arginine 87 and arginine 93. NAD(+)-binding positions include asparagine 100 and 123 to 125; that span reads LTN. A substrate-binding site is contributed by asparagine 125. A Phosphoserine modification is found at serine 149. Arginine 156 serves as a coordination point for substrate. Residue histidine 180 is the Proton acceptor of the active site.

It belongs to the LDH/MDH superfamily. MDH type 3 family.

The enzyme catalyses (S)-malate + NAD(+) = oxaloacetate + NADH + H(+). Functionally, catalyzes the reversible oxidation of malate to oxaloacetate. The chain is Malate dehydrogenase from Bacillus licheniformis (strain ATCC 14580 / DSM 13 / JCM 2505 / CCUG 7422 / NBRC 12200 / NCIMB 9375 / NCTC 10341 / NRRL NRS-1264 / Gibson 46).